Reading from the N-terminus, the 687-residue chain is Protein white (687 aa).

A disordered region spans residues 1–30 (MGQEDQELLIRGGSKHPSAEHLNNGDSGAA). At 1–419 (MGQEDQELLI…FMQFRAVLWR (419 aa)) the chain is on the cytoplasmic side. An ABC transporter domain is found at 93-341 (NRTRGLFCNE…FSYVGAQCPT (249 aa)). 130–137 (GSSGAGKT) is an ATP binding site. The helical transmembrane segment at 420–440 (SWLSVLKEPLLVKVRLIQTTM) threads the bilayer. The Extracellular portion of the chain corresponds to 441 to 460 (VAILIGLIFLGQQLTQVGVM). Residues 461 to 481 (NINGAIFLFLTNMTFQNVFAT) traverse the membrane as a helical segment. Residues 482-497 (INVFTSELPVFMREAR) lie on the Cytoplasmic side of the membrane. Residues 498–518 (SRLYRCDTYFLGKTIAELPLF) form a helical membrane-spanning segment. The Extracellular portion of the chain corresponds to 519–531 (LTVPLVFTAIAYP). The helical transmembrane segment at 532–552 (MIGLRAGVLHFFNCLALVTLV) threads the bilayer. Topologically, residues 553–568 (ANVSTSFGYLISCASS) are cytoplasmic. Residues 569 to 589 (STSMALSVGPPVIIPFLLFGG) traverse the membrane as a helical segment. Residues 590 to 644 (FFLNSGSVPVYLKWLSYLSWFRYANEGLLINQWADVEPGEISCTSSNTTCPSSGK) are Extracellular-facing. Asn636 is a glycosylation site (N-linked (GlcNAc...) asparagine). Residues 645-665 (VILETLNFSAADLPLDYVGLA) form a helical membrane-spanning segment. The Cytoplasmic segment spans residues 666-675 (ILIVSFRVLA).

It belongs to the ABC transporter superfamily. ABCG family. Eye pigment precursor importer (TC 3.A.1.204) subfamily. As to quaternary structure, may form a heterodimer with bw/brown. May form a heterodimer with st/scarlet. In terms of tissue distribution, expressed in the head (at protein level). Expressed in the eye, specifically in retina primary pigment cells, in the basement membrane of the base of secondary and tertiary pigment cells, and in retinula cells (at protein level). Expressed in the retina underlying lamina in the epithelial glia that surrounds the array of lamina cartridges (at protein level). Weakly expressed in photoreceptors, specifically in terminals of R1-R6, R7 and R8 (at protein level). Expressed at very low levels in medulla and central brain (at protein level). Expressed in principal cells of the Malpighian tubules.

Its subcellular location is the cytoplasmic vesicle membrane. The catalysed reaction is 3',5'-cyclic GMP(in) + ATP + H2O = 3',5'-cyclic GMP(out) + ADP + phosphate + H(+). It catalyses the reaction guanine(out) + ATP + H2O = guanine(in) + ADP + phosphate + H(+). The enzyme catalyses riboflavin(in) + ATP + H2O = riboflavin(out) + ADP + phosphate + H(+). It carries out the reaction (6S)-5,6,7,8-tetrahydrofolate(out) + ATP + H2O = (6S)-5,6,7,8-tetrahydrofolate(in) + ADP + phosphate + H(+). The catalysed reaction is L-tryptophan(out) + ATP + H2O = L-tryptophan(in) + ADP + phosphate + H(+). It catalyses the reaction L-kynurenine(out) + ATP + H2O = L-kynurenine(in) + ADP + phosphate + H(+). The enzyme catalyses xanthine(out) + ATP + H2O = xanthine(in) + ADP + phosphate + H(+). Functionally, ATP-dependent transporter of the ATP-binding cassette (ABC) family which transports various molecules including bioamines, neurotransmitters, metabolic intermediates and second messengers. In the eye, required for the transport of the eye red and brown pigment precursors, guanine and tryptophan, into pigment cell granules. Probably in association with bw/brown, involved in the transport of guanine. Probably in association with st/scarlet involved in the transport of kynurenine and probably tryptophan. Involved in the transport of kynurenine in pupal eyes. May play a role in histamine uptake by the lamina epithelial glia which surrounds photoreceptors R1-R6. In Malpighian tubules, involved in the transport of cGMP, guanine, xanthine, riboflavin, kynurenine and tryptophan. Probably in association with br/brown, involved in aging-induced intestinal stem cell proliferation in the midgut by regulating tetrahydrofolate transport. Probably in association with st/scarlet, plays a role in zinc storage granule biogenesis in Malpighian tubule principal epithelial cells. The protein is Protein white of Drosophila melanogaster (Fruit fly).